Reading from the N-terminus, the 375-residue chain is tRNA-specific 2-thiouridylase MnmA (375 aa).

ATP contacts are provided by residues G12 to S19 and M38. An interaction with target base in tRNA region spans residues N98–D100. C103 (nucleophile) is an active-site residue. A disulfide bond links C103 and C200. G127 provides a ligand contact to ATP. Residues K150–Q152 form an interaction with tRNA region. C200 acts as the Cysteine persulfide intermediate in catalysis. The segment at R312–Y313 is interaction with tRNA.

It belongs to the MnmA/TRMU family.

The protein localises to the cytoplasm. The catalysed reaction is S-sulfanyl-L-cysteinyl-[protein] + uridine(34) in tRNA + AH2 + ATP = 2-thiouridine(34) in tRNA + L-cysteinyl-[protein] + A + AMP + diphosphate + H(+). Functionally, catalyzes the 2-thiolation of uridine at the wobble position (U34) of tRNA, leading to the formation of s(2)U34. This chain is tRNA-specific 2-thiouridylase MnmA, found in Lactobacillus helveticus (strain DPC 4571).